The primary structure comprises 302 residues: Protein MGF 110-11L (302 aa).

Residues 26 to 46 (PFGCNMKGLGVLLGLFSLILA) form a helical membrane-spanning segment. A glycan (N-linked (GlcNAc...) asparagine; by host) is linked at Asn-97. 2 helical membrane passes run 154 to 174 (LTLKQYCLYFIISIAFAGCFV) and 183 to 203 (LNTTIKLLTLLSILVYLAQPV). Asn-294 carries N-linked (GlcNAc...) asparagine; by host glycosylation.

Belongs to the asfivirus MGF 110 family.

It is found in the host membrane. Its function is as follows. Plays a role in virus cell tropism, and may be required for efficient virus replication in macrophages. The protein is Protein MGF 110-11L of African swine fever virus (isolate Tick/South Africa/Pretoriuskop Pr4/1996) (ASFV).